We begin with the raw amino-acid sequence, 575 residues long: Muellerian-inhibiting factor (575 aa).

The signal sequence occupies residues 1-20 (MQGPSLSQLVLVLMGALLEA). Positions 21–466 (GTPREEVSST…ERSGPARAQR (446 aa)) are excised as a propeptide. N-linked (GlcNAc...) asparagine glycosylation is found at Asn-78 and Asn-343. Cystine bridges form between Cys-477–Cys-541, Cys-503–Cys-572, and Cys-507–Cys-574.

This sequence belongs to the TGF-beta family. As to quaternary structure, homodimer; disulfide-linked. Preproprotein is proteolytically processed to generate N- and C-terminal cleavage products that homodimerize and associate to form a biologically active non-covalent complex. Binding of the non-covalent complex to AMHR2 induces dissociation of the pro-region from the mature C-terminal dimer. The N-terminal portion of the protein, despite having no intrinsic activity, has the role of amplifying the activity of the C-terminus. Detected in fetal Sertoli cells. Expressed in granulosa cells of growing follicles but also in theca cells of preovulatory follicles and corpora lutea (at protein level).

The protein localises to the secreted. Functionally, plays an important role in several reproductive functions. Induces Muellerian duct regression during male fetal sexual differentiation and plays a role in Leydig cell differentiation and function. In female acts as a negative regulator of the primordial to primary follicle transition and decreases FSH sensitivity of growing follicles. AMH signals by binding to a specific type-II receptor, AMHR2, that heterodimerizes with type-I receptors (ACVR1 and BMPR1A), and recruiting SMAD proteins that are translocated to the nucleus to regulate target gene expression. This is Muellerian-inhibiting factor (AMH) from Sus scrofa (Pig).